A 95-amino-acid polypeptide reads, in one-letter code: Ferredoxin-4 (95 aa).

In terms of domain architecture, 2Fe-2S ferredoxin-type spans 2–95; sequence DKATLTFTDV…LGGAVKVRPA (94 aa). The [2Fe-2S] cluster site is built by cysteine 38, cysteine 43, cysteine 46, and cysteine 81.

This sequence belongs to the 2Fe2S plant-type ferredoxin family. It depends on [2Fe-2S] cluster as a cofactor.

Functionally, ferredoxins are iron-sulfur proteins that transfer electrons in a wide variety of metabolic reactions. This ferredoxin is required for nitrogen fixation. In Rhodobacter capsulatus (Rhodopseudomonas capsulata), this protein is Ferredoxin-4 (fdxC).